The following is a 452-amino-acid chain: Protein disulfide-isomerase TMX3 (452 aa).

Residues 1–26 (MAAAGLCFILAIVSSTSLLASVPVSA) form the signal peptide. The region spanning 27–128 (LVEDLDDSFK…KEDIVEFANR (102 aa)) is the Thioredoxin domain. Topologically, residues 27-375 (LVEDLDDSFK…TVVSVFKSSP (349 aa)) are lumenal. Residues C53 and C56 each act as nucleophile in the active site. A disulfide bridge links C53 with C56. N258 and N313 each carry an N-linked (GlcNAc...) asparagine glycan. Residues 376–396 (LLGCFLFGLPLGVISIMCYGI) form a helical membrane-spanning segment. Residues 397–452 (CTADTEDGSEEMTRKDVIDQNASDEGSDEEEEKGREITDVSDEDQQEKDFMEKKID) are Cytoplasmic-facing. Residues 405–452 (SEEMTRKDVIDQNASDEGSDEEEEKGREITDVSDEDQQEKDFMEKKID) are disordered. The span at 443-452 (EKDFMEKKID) shows a compositional bias: basic and acidic residues. Positions 449-452 (KKID) match the Di-lysine motif motif.

It belongs to the protein disulfide isomerase family.

It localises to the endoplasmic reticulum membrane. The enzyme catalyses Catalyzes the rearrangement of -S-S- bonds in proteins.. Functionally, probable disulfide isomerase, which participates in the folding of proteins containing disulfide bonds. May act as a dithiol oxidase. Acts as a regulator of endoplasmic reticulum-mitochondria contact sites via its ability to regulate redox signals. The chain is Protein disulfide-isomerase TMX3 (tmx3) from Xenopus laevis (African clawed frog).